A 545-amino-acid chain; its full sequence is External NADH-ubiquinone oxidoreductase 2, mitochondrial (545 aa).

A mitochondrion-targeting transit peptide spans 1–21 (MLPRLGFARTARSIHRFKMTQ). Residue 99 to 129 (ELVILGTGWGAISLLKKLDTSLYNVTVVSPR) coordinates FAD. Residue 260-296 (LTFVVVGGGPTGVEFAAELQDYINQDLRKWMPDLSKE) participates in NAD(+) binding.

It belongs to the NADH dehydrogenase family.

It is found in the mitochondrion intermembrane space. The enzyme catalyses a quinone + NADH + H(+) = a quinol + NAD(+). It catalyses the reaction a ubiquinone + NADH + H(+) = a ubiquinol + NAD(+). External NADH dehydrogenase required for optimum cellular growth with a number of nonfermentable carbon sources, including ethanol. With NDE1, performes the mitochondrial oxidation of cytosolic NADH under these growth conditions. Regulates the mitochondrial glycerol-3-phosphate dehydrogenase, GUT2, also involved in cytosolic NADH oxidation. This chain is External NADH-ubiquinone oxidoreductase 2, mitochondrial (NDE2), found in Saccharomyces cerevisiae (strain ATCC 204508 / S288c) (Baker's yeast).